Reading from the N-terminus, the 216-residue chain is Large ribosomal subunit protein uL3 (216 aa).

The disordered stretch occupies residues 136-155 (GVSISHRSHGSTGQRQDPGK). Residue Gln-151 is modified to N5-methylglutamine.

The protein belongs to the universal ribosomal protein uL3 family. Part of the 50S ribosomal subunit. Forms a cluster with proteins L14 and L19. Post-translationally, methylated by PrmB.

One of the primary rRNA binding proteins, it binds directly near the 3'-end of the 23S rRNA, where it nucleates assembly of the 50S subunit. The protein is Large ribosomal subunit protein uL3 of Rickettsia prowazekii (strain Madrid E).